The following is a 92-amino-acid chain: Small ribosomal subunit protein uS19c (92 aa).

It belongs to the universal ribosomal protein uS19 family.

Its subcellular location is the plastid. It is found in the chloroplast. Protein S19 forms a complex with S13 that binds strongly to the 16S ribosomal RNA. The protein is Small ribosomal subunit protein uS19c (rps19) of Guillardia theta (Cryptophyte).